Reading from the N-terminus, the 1173-residue chain is Fas-binding factor 1 (1173 aa).

The segment at 17–168 (MALRTKKGLK…PSSSKTGLQY (152 aa)) is disordered. The segment covering 46–56 (KPAEPASHAKD) has biased composition (basic and acidic residues). Low complexity predominate over residues 80 to 93 (AGADAEASSVSDAD). Ser172 is modified (phosphoserine). 2 disordered regions span residues 180–225 (LAGL…GDTP) and 241–566 (TTLG…SSRE). Residues 206 to 216 (SPGAAAGQGPS) are compositionally biased toward low complexity. Composition is skewed to basic and acidic residues over residues 247-258 (DSPKAERKKTGD) and 287-299 (TGER…DKKY). 4 stretches are compositionally biased toward polar residues: residues 331–345 (VASS…QSVS), 396–411 (SPVQ…MTPS), 468–477 (VISQKKSQNL), and 533–544 (TGSSMSWSQATT). 3 coiled-coil regions span residues 617–742 (TAQL…QQAS), 808–917 (QQRE…MNKC), and 975–1057 (CELR…VQRQ). Lys1002 participates in a covalent cross-link: Glycyl lysine isopeptide (Lys-Gly) (interchain with G-Cter in SUMO2). Positions 1091–1124 (ASLPGLPPRVQGPAASSRDAVQAPASSSPQCSQP) are disordered. A compositionally biased stretch (low complexity) spans 1110–1124 (AVQAPASSSPQCSQP).

Interacts with PARD3. May interact with FAS cytoplasmic domain. Interacts with TRAPPC14. Broadly expressed.

The protein resides in the cytoplasm. It localises to the cytoskeleton. The protein localises to the microtubule organizing center. It is found in the centrosome. Its subcellular location is the centriole. The protein resides in the spindle pole. It localises to the cell junction. In terms of biological role, keratin-binding protein required for epithelial cell polarization. Involved in apical junction complex (AJC) assembly via its interaction with PARD3. Required for ciliogenesis. The protein is Fas-binding factor 1 (Fbf1) of Mus musculus (Mouse).